A 211-amino-acid polypeptide reads, in one-letter code: SsrA-binding protein (211 aa).

Disordered regions lie at residues 1–20 (MHRRSSKSYSSRNSKTPERS) and 170–211 (RLRR…RHEN). Residues 177–187 (QRNTQRSVTPR) are compositionally biased toward polar residues.

The protein belongs to the SmpB family.

The protein localises to the cytoplasm. Functionally, required for rescue of stalled ribosomes mediated by trans-translation. Binds to transfer-messenger RNA (tmRNA), required for stable association of tmRNA with ribosomes. tmRNA and SmpB together mimic tRNA shape, replacing the anticodon stem-loop with SmpB. tmRNA is encoded by the ssrA gene; the 2 termini fold to resemble tRNA(Ala) and it encodes a 'tag peptide', a short internal open reading frame. During trans-translation Ala-aminoacylated tmRNA acts like a tRNA, entering the A-site of stalled ribosomes, displacing the stalled mRNA. The ribosome then switches to translate the ORF on the tmRNA; the nascent peptide is terminated with the 'tag peptide' encoded by the tmRNA and targeted for degradation. The ribosome is freed to recommence translation, which seems to be the essential function of trans-translation. This chain is SsrA-binding protein, found in Tropheryma whipplei (strain TW08/27) (Whipple's bacillus).